Consider the following 556-residue polypeptide: PPE family protein PPE2 (556 aa).

The segment at 8 to 164 (ASPPEVHSAL…ASYQAVSTAA (157 aa)) is PPE. An SH3-like region spans residues 201 to 256 (QKIGYTDFYNNVIQPFINWLTNLPFLQAMFSGFDPWLPSLGNPLTFLSPANIAFAL). Positions 319–340 (LEQTLALLPAALPLLAAPLAPL) are leucine zipper motif. 2 disordered regions span residues 385 to 418 (TPTPAPAPAPTAVTAPTPPPGPPPPPVTAPPPVT) and 443 to 556 (GTGV…TRVE). Residues 400 to 417 (PTPPPGPPPPPVTAPPPV) show a composition bias toward pro residues. The span at 456–471 (AEAPAAAAAPEEQVQP) shows a compositional bias: low complexity. The span at 472–481 (QRRRRPKIKQ) shows a compositional bias: basic residues. The Nuclear localization signal motif lies at 473 to 481 (RRRRPKIKQ).

Belongs to the mycobacterial PPE family.

It localises to the secreted. Its subcellular location is the host cytoplasm. It is found in the host nucleus. In terms of biological role, inhibits nitric oxide (NO) production in activated macrophages. Acts by inhibiting expression of the host inducible nitric oxide synthase (iNOS). PPE2 is translocated into the host macrophage nucleus, where it interacts with a GATA-binding site overlapping with the TATA box of NOS2 (iNOS) promoter, and strongly inhibits NOS2 gene transcription. Reduction in NO production in turn facilitates intracellular survival of the bacilli inside the macrophage. In addition, disrupts the assembly of NADPH oxidase complex, which inhibits NADPH oxidase-mediated reactive oxygen species (ROS) generation in macrophages and favors M.tuberculosis survival. Acts by interacting with NCF2, the cytosolic subunit of NADPH oxidase, and preventing translocation of NCF2 and NCF1 to the membrane, which causes a reduction of the functional assembly of NADPH oxidase complex and a decrease in NADPH oxidase activity. In Mycobacterium tuberculosis (strain ATCC 25618 / H37Rv), this protein is PPE family protein PPE2 (PPE2).